Reading from the N-terminus, the 294-residue chain is N-acetylmuramic acid 6-phosphate etherase (294 aa).

One can recognise an SIS domain in the interval 54–217 (VIQSFEEEGR…STASMIGVGK (164 aa)). E82 serves as the catalytic Proton donor. Residue E113 is part of the active site.

The protein belongs to the GCKR-like family. MurNAc-6-P etherase subfamily. In terms of assembly, homodimer.

It catalyses the reaction N-acetyl-D-muramate 6-phosphate + H2O = N-acetyl-D-glucosamine 6-phosphate + (R)-lactate. It functions in the pathway amino-sugar metabolism; N-acetylmuramate degradation. Specifically catalyzes the cleavage of the D-lactyl ether substituent of MurNAc 6-phosphate, producing GlcNAc 6-phosphate and D-lactate. This is N-acetylmuramic acid 6-phosphate etherase from Bacillus cereus (strain AH820).